The primary structure comprises 57 residues: Aminopeptidase A (57 aa).

At 1–57 (YLTDHYFKVDLNSTVTQQRFLLDPSELAGITIMQPSDSNIEWLKQYRDDVATWLENS) the chain is on the extracellular side. Asn12 carries an N-linked (GlcNAc...) asparagine glycan.

It belongs to the peptidase M1 family. As to quaternary structure, homodimer; disulfide-linked. The cofactor is Zn(2+).

It localises to the cell membrane. It catalyses the reaction Release of N-terminal glutamate (and to a lesser extent aspartate) from a peptide.. Its activity is regulated as follows. Inhibited by the aminopeptidase competitive inhibitors amastatin (Leu and acidic inhibitor), and bestatin (Leu inhibitor), by chelating agents EDTA, and 1,10-Phenanthroline, as well as by Zn(2+) ions. Substrate specificity is modulated by Ca(2+), Ba(2+), and Mn(2+) ions which enhances the enzymatic activity for cleavage of acidic residues. In terms of biological role, venom protein that cleaves N-terminal acidic residues from peptides with high potency in presence of calcium. It may have several roles in venom including alteration of blood pressure by cleaving circulating angiotensin-2, general degradation of host tissue, increase of permeability to other venom components, and/or processing of other toxins in the venom. The sequence is that of Aminopeptidase A from Gloydius blomhoffii (Mamushi).